A 720-amino-acid chain; its full sequence is Transcription factor bHLH155 (720 aa).

The segment covering 522–534 has biased composition (polar residues); sequence YPSSSSDQFQTSL. The tract at residues 522–558 is disordered; it reads YPSSSSDQFQTSLDIPKKNKKRAKPGESSRPRPRDRQ. Residues 540–547 carry the Nuclear localization signal motif; the sequence is NKKRAKPG. The 50-residue stretch at 544–593 folds into the bHLH domain; it reads AKPGESSRPRPRDRQLIQDRIKELRELVPNGSKCSIDSLLERTIKHMLFL. Positions 545 to 558 are enriched in basic and acidic residues; the sequence is KPGESSRPRPRDRQ.

This sequence belongs to the bHLH protein family. LHW subfamily. In terms of assembly, homodimer.

It localises to the nucleus. Transcription factor that may regulate root development. The polypeptide is Transcription factor bHLH155 (BHLH155) (Arabidopsis thaliana (Mouse-ear cress)).